A 494-amino-acid polypeptide reads, in one-letter code: Solute carrier family 2, facilitated glucose transporter member 3 (494 aa).

Residues 1 to 10 (MGTTKVTPYL) lie on the Cytoplasmic side of the membrane. The chain crosses the membrane as a helical span at residues 11–32 (IFATSVAAIGSFQFGYNTGVIN). Topologically, residues 33–64 (APEMIIRDFLNYTLDEKLDEPPSRLLLTNLWS) are extracellular. Asparagine 43 carries an N-linked (GlcNAc...) asparagine glycan. A helical transmembrane segment spans residues 65 to 84 (LSVAIFSVGGMIGSFSVGLF). The Cytoplasmic portion of the chain corresponds to 85 to 89 (NRFGR). The helical transmembrane segment at 90-110 (RNSMLIVNLLAVIGGCLMGFC) threads the bilayer. Topologically, residues 111–117 (KISESVE) are extracellular. The helical transmembrane segment at 118–141 (MLILGRLVIGVFCGLCTGFVPMYI) threads the bilayer. The Cytoplasmic segment spans residues 142 to 152 (GEISPTALRGA). The helical transmembrane segment at 153–173 (FGTLNQLGIVIGILVAQIFGL) threads the bilayer. Glutamine 158 is a D-glucose binding site. The Extracellular segment spans residues 174–182 (EIILGSEVL). A helical membrane pass occupies residues 183 to 203 (WPVLLGFTIIPAILQSAALPF). Residues 204–268 (CPESPRFLLI…LFRAPSYRQP (65 aa)) lie on the Cytoplasmic side of the membrane. A Phosphothreonine modification is found at threonine 231. Residues 269–289 (IIISIVLQLSQQLSGINAVFY) traverse the membrane as a helical segment. An important for selectivity against fructose region spans residues 276-278 (QLS). D-glucose-binding positions include 279 to 280 (QQ) and asparagine 285. Over 290-303 (YSTGIFKDAGVKEP) the chain is Extracellular. The chain crosses the membrane as a helical span at residues 304 to 324 (IYATIGAGVVNTIFTIVSVFL). A D-glucose-binding site is contributed by asparagine 314. At 325 to 330 (VERAGR) the chain is on the cytoplasmic side. A helical membrane pass occupies residues 331 to 351 (RTLHLIGLGGMALCSVLMTVS). Topologically, residues 352 to 362 (LLLKDKYDTMS) are extracellular. The helical transmembrane segment at 363 to 388 (LVCIAAILIYVAFFEIGPGPIPWFIV) threads the bilayer. Glutamate 377 and tryptophan 385 together coordinate D-glucose. Over 389-398 (AELFSQGPRP) the chain is Cytoplasmic. The chain crosses the membrane as a helical span at residues 399–419 (AAMAVAGCSNWTSNFLVGLLF). Residues 420–428 (PSAAYYLGA) are Extracellular-facing. The chain crosses the membrane as a helical span at residues 429–449 (YVFVIFAVFLVAFFIFTFFKV). Over 450–494 (PETRGRTFEDITRAFEGQAAEANKLGKGPTMEMNSIQPIETTTHV) the chain is Cytoplasmic. Serine 484 is modified (phosphoserine). Threonine 491 carries the phosphothreonine modification.

It belongs to the major facilitator superfamily. Sugar transporter (TC 2.A.1.1) family. Glucose transporter subfamily. As to quaternary structure, interacts with SMIM43; the interaction may promote SLC2A3-mediated glucose transport to meet the energy needs of mesendoderm differentiation. As to expression, detected in stomach, placenta, lung and brain.

It localises to the cell membrane. It is found in the perikaryon. The protein localises to the cell projection. The enzyme catalyses D-glucose(out) = D-glucose(in). The catalysed reaction is D-galactose(in) = D-galactose(out). With respect to regulation, deoxyglucose transport is inhibited by D-glucose, D-galactose and maltose. Galactose transport is inhibited by D-glucose and maltose. Facilitative glucose transporter. Can also mediate the uptake of various other monosaccharides across the cell membrane. Mediates the uptake of glucose, 2-deoxyglucose, galactose, mannose, xylose and fucose, and probably also dehydroascorbate. Does not mediate fructose transport. Required for mesendoderm differentiation. In Oryctolagus cuniculus (Rabbit), this protein is Solute carrier family 2, facilitated glucose transporter member 3.